A 64-amino-acid polypeptide reads, in one-letter code: Outer envelope membrane protein 7 (64 aa).

Over Met-1–Thr-11 the chain is Chloroplast intermembrane. The chain crosses the membrane as a helical span at residues Val-12 to Leu-32. Positions Lys-29–Phe-35 match the AKR2A-binding sequence (ABS) required for chloroplast outer envelope membrane targeting motif. Residues Asp-33–Leu-64 lie on the Cytoplasmic side of the membrane. Residues Ile-39–Pro-48 show a composition bias toward basic and acidic residues. A disordered region spans residues Ile-39–Leu-64. A compositionally biased stretch (low complexity) spans Thr-53–Leu-64.

In terms of assembly, interacts with AKR2A. Confined to green tissues.

Its subcellular location is the plastid. It is found in the chloroplast outer membrane. The chain is Outer envelope membrane protein 7 from Arabidopsis thaliana (Mouse-ear cress).